The chain runs to 89 residues: Small ribosomal subunit protein uS15 (89 aa).

A compositionally biased stretch (basic and acidic residues) spans 1-20 (MSITQERKSALIAEHARGKT). Residues 1–24 (MSITQERKSALIAEHARGKTDTGS) are disordered.

The protein belongs to the universal ribosomal protein uS15 family. In terms of assembly, part of the 30S ribosomal subunit. Forms a bridge to the 50S subunit in the 70S ribosome, contacting the 23S rRNA.

Functionally, one of the primary rRNA binding proteins, it binds directly to 16S rRNA where it helps nucleate assembly of the platform of the 30S subunit by binding and bridging several RNA helices of the 16S rRNA. Forms an intersubunit bridge (bridge B4) with the 23S rRNA of the 50S subunit in the ribosome. This chain is Small ribosomal subunit protein uS15, found in Maricaulis maris (strain MCS10) (Caulobacter maris).